The following is a 237-amino-acid chain: Small ribosomal subunit protein uS3 (237 aa).

The 69-residue stretch at 39–107 (IRAYLMEELK…ETHLNIVEVR (69 aa)) folds into the KH type-2 domain. Residues 213-237 (MASERRATESDNQGGSGRERRRENA) are disordered.

The protein belongs to the universal ribosomal protein uS3 family. Part of the 30S ribosomal subunit. Forms a tight complex with proteins S10 and S14.

Its function is as follows. Binds the lower part of the 30S subunit head. Binds mRNA in the 70S ribosome, positioning it for translation. In Rhizobium meliloti (strain 1021) (Ensifer meliloti), this protein is Small ribosomal subunit protein uS3.